Reading from the N-terminus, the 195-residue chain is MVDQAQDTLRPNNRLSDMQATMEQTQAFENRVLERLNAGKTVRSFLITAVELLTEAVNLLVLQVFRKDDYAVKYAVEPLLDGDGPLGDLSVRLKLIYGLGVINRQEYEDAELLMALREELNHDGNEYAFTDDEILGPFGELHCVAALPPPPQFEPADSSLYAMQIQRYQQAVRSTMVLSLTELISKISLKKAFQK.

It belongs to the MtlR/FumE family. In terms of assembly, homodimer. Can also form higher level multimer aggregates.

Its function is as follows. Involved in the repression of the expression of the mannitol mtlADR operon. Does not bind the operator/promoter regulatory region of this operon. Therefore, seems to belong to a new class of transcription factors in bacteria that may regulate gene expression indirectly, perhaps as a part of a larger transcriptional complex. This Escherichia coli O6:H1 (strain CFT073 / ATCC 700928 / UPEC) protein is Mannitol operon repressor.